We begin with the raw amino-acid sequence, 507 residues long: ATP synthase subunit alpha, chloroplastic (507 aa).

170–177 (GDRQTGKT) is an ATP binding site. Residue threonine 257 is modified to Phosphothreonine.

It belongs to the ATPase alpha/beta chains family. F-type ATPases have 2 components, CF(1) - the catalytic core - and CF(0) - the membrane proton channel. CF(1) has five subunits: alpha(3), beta(3), gamma(1), delta(1), epsilon(1). CF(0) has four main subunits: a, b, b' and c.

Its subcellular location is the plastid. It localises to the chloroplast thylakoid membrane. The catalysed reaction is ATP + H2O + 4 H(+)(in) = ADP + phosphate + 5 H(+)(out). Produces ATP from ADP in the presence of a proton gradient across the membrane. The alpha chain is a regulatory subunit. This chain is ATP synthase subunit alpha, chloroplastic, found in Barbarea verna (Land cress).